The following is a 246-amino-acid chain: 3-deoxy-manno-octulosonate cytidylyltransferase (246 aa).

Belongs to the KdsB family.

The protein localises to the cytoplasm. The enzyme catalyses 3-deoxy-alpha-D-manno-oct-2-ulosonate + CTP = CMP-3-deoxy-beta-D-manno-octulosonate + diphosphate. It participates in nucleotide-sugar biosynthesis; CMP-3-deoxy-D-manno-octulosonate biosynthesis; CMP-3-deoxy-D-manno-octulosonate from 3-deoxy-D-manno-octulosonate and CTP: step 1/1. The protein operates within bacterial outer membrane biogenesis; lipopolysaccharide biosynthesis. In terms of biological role, activates KDO (a required 8-carbon sugar) for incorporation into bacterial lipopolysaccharide in Gram-negative bacteria. This chain is 3-deoxy-manno-octulosonate cytidylyltransferase, found in Rickettsia felis (strain ATCC VR-1525 / URRWXCal2) (Rickettsia azadi).